Here is a 485-residue protein sequence, read N- to C-terminus: Rhamnulokinase (485 aa).

Position 11–15 (11–15 (ASSGR)) interacts with ATP. Residues Ala-79 and 234–236 (HDT) contribute to the substrate site. The active-site Proton acceptor is the Asp-235. Thr-257 contributes to the ATP binding site. Asn-294 provides a ligand contact to substrate. ATP contacts are provided by Gln-302 and Gly-401.

Belongs to the rhamnulokinase family. Requires Mg(2+) as cofactor.

It carries out the reaction L-rhamnulose + ATP = L-rhamnulose 1-phosphate + ADP + H(+). It functions in the pathway carbohydrate degradation; L-rhamnose degradation; glycerone phosphate from L-rhamnose: step 2/3. Its function is as follows. Involved in the catabolism of L-rhamnose (6-deoxy-L-mannose). Catalyzes the transfer of the gamma-phosphate group from ATP to the 1-hydroxyl group of L-rhamnulose to yield L-rhamnulose 1-phosphate. The sequence is that of Rhamnulokinase from Ligilactobacillus salivarius (strain UCC118) (Lactobacillus salivarius).